A 332-amino-acid chain; its full sequence is 4-hydroxyproline 2-epimerase 2 (332 aa).

Cysteine 89 acts as the Proton acceptor in catalysis. Residues histidine 222, aspartate 248, and 253-254 (GT) contribute to the substrate site.

It belongs to the proline racemase family.

It catalyses the reaction trans-4-hydroxy-L-proline = cis-4-hydroxy-D-proline. Its function is as follows. Catalyzes the epimerization of trans-4-hydroxy-L-proline (t4LHyp) to cis-4-hydroxy-D-proline (c4DHyp). Is likely involved in a degradation pathway that converts t4LHyp to alpha-ketoglutarate. Displays no proline racemase activity. This chain is 4-hydroxyproline 2-epimerase 2, found in Rhizobium rhizogenes (strain K84 / ATCC BAA-868) (Agrobacterium radiobacter).